A 127-amino-acid polypeptide reads, in one-letter code: Aspartate 1-decarboxylase (127 aa).

Ser25 acts as the Schiff-base intermediate with substrate; via pyruvic acid in catalysis. Ser25 carries the pyruvic acid (Ser) modification. Thr57 contributes to the substrate binding site. Tyr58 serves as the catalytic Proton donor. Gly73–Ala75 contributes to the substrate binding site.

It belongs to the PanD family. Heterooctamer of four alpha and four beta subunits. Pyruvate is required as a cofactor. In terms of processing, is synthesized initially as an inactive proenzyme, which is activated by self-cleavage at a specific serine bond to produce a beta-subunit with a hydroxyl group at its C-terminus and an alpha-subunit with a pyruvoyl group at its N-terminus.

It localises to the cytoplasm. The catalysed reaction is L-aspartate + H(+) = beta-alanine + CO2. The protein operates within cofactor biosynthesis; (R)-pantothenate biosynthesis; beta-alanine from L-aspartate: step 1/1. Its function is as follows. Catalyzes the pyruvoyl-dependent decarboxylation of aspartate to produce beta-alanine. The polypeptide is Aspartate 1-decarboxylase (Clostridium botulinum (strain ATCC 19397 / Type A)).